Here is a 312-residue protein sequence, read N- to C-terminus: DNA-directed RNA polymerase subunit alpha (312 aa).

The alpha N-terminal domain (alpha-NTD) stretch occupies residues 1–226 (MIEFEKPKIT…DHLNLFVDLS (226 aa)). The interval 243–312 (TERVLDKIIE…ELGLSLKKRK (70 aa)) is alpha C-terminal domain (alpha-CTD).

Belongs to the RNA polymerase alpha chain family. As to quaternary structure, homodimer. The RNAP catalytic core consists of 2 alpha, 1 beta, 1 beta' and 1 omega subunit. When a sigma factor is associated with the core the holoenzyme is formed, which can initiate transcription.

The enzyme catalyses RNA(n) + a ribonucleoside 5'-triphosphate = RNA(n+1) + diphosphate. In terms of biological role, DNA-dependent RNA polymerase catalyzes the transcription of DNA into RNA using the four ribonucleoside triphosphates as substrates. In Lactococcus lactis subsp. cremoris (strain MG1363), this protein is DNA-directed RNA polymerase subunit alpha.